The chain runs to 519 residues: Probable cytosol aminopeptidase (519 aa).

Residues Lys-283 and Asp-288 each coordinate Mn(2+). The active site involves Lys-295. 3 residues coordinate Mn(2+): Asp-306, Asp-365, and Glu-367. Arg-369 is a catalytic residue.

This sequence belongs to the peptidase M17 family. It depends on Mn(2+) as a cofactor.

It localises to the cytoplasm. The catalysed reaction is Release of an N-terminal amino acid, Xaa-|-Yaa-, in which Xaa is preferably Leu, but may be other amino acids including Pro although not Arg or Lys, and Yaa may be Pro. Amino acid amides and methyl esters are also readily hydrolyzed, but rates on arylamides are exceedingly low.. It carries out the reaction Release of an N-terminal amino acid, preferentially leucine, but not glutamic or aspartic acids.. In terms of biological role, presumably involved in the processing and regular turnover of intracellular proteins. Catalyzes the removal of unsubstituted N-terminal amino acids from various peptides. This Mycobacterium ulcerans (strain Agy99) protein is Probable cytosol aminopeptidase.